The chain runs to 172 residues: Translationally-controlled tumor protein (172 aa).

One can recognise a TCTP domain in the interval 1-172 (MIIYRDLISH…FKDGLEMEKC (172 aa)). S46 bears the Phosphoserine; by PLK1 mark. At S53 the chain carries Phosphoserine. S64 carries the phosphoserine; by PLK1 modification. The interval 70–172 (VDIVMNHHLQ…FKDGLEMEKC (103 aa)) is required for reduction of TSC22D1 protein stability.

It belongs to the TCTP family. Homodimer. Interacts with STEAP3. Interacts with TSC22D1; interaction results in the destabilization of TSC22D1 protein.

It localises to the cytoplasm. Involved in calcium binding and microtubule stabilization. Acts as a negative regulator of TSC22D1-mediated apoptosis, via interaction with and destabilization of TSC22D1 protein. The polypeptide is Translationally-controlled tumor protein (TPT1) (Oryctolagus cuniculus (Rabbit)).